The chain runs to 399 residues: Subtilisin-like protease 4 (399 aa).

Positions 1–19 are cleaved as a signal peptide; sequence MVCLKTLSVFLAAFAAADA. The propeptide occupies 20-118; the sequence is RAVFKTQGHK…VEQDQVVRIS (99 aa). One can recognise an Inhibitor I9 domain in the interval 38 to 117; it reads YIVVMKDGVS…YVEQDQVVRI (80 aa). The region spanning 128-399 is the Peptidase S8 domain; the sequence is SWGLGRVSHR…NRLLYNGSGQ (272 aa). Catalysis depends on charge relay system residues D160 and H191. Residues N252 and N308 are each glycosylated (N-linked (GlcNAc...) asparagine). S346 acts as the Charge relay system in catalysis. The N-linked (GlcNAc...) asparagine glycan is linked to N395.

It belongs to the peptidase S8 family.

The protein localises to the secreted. In terms of biological role, secreted subtilisin-like serine protease with keratinolytic activity that contributes to pathogenicity. The polypeptide is Subtilisin-like protease 4 (SUB4) (Arthroderma benhamiae (strain ATCC MYA-4681 / CBS 112371) (Trichophyton mentagrophytes)).